Consider the following 460-residue polypeptide: tRNA (guanine(10)-N(2))-methyltransferase TRMT11 (460 aa).

N-acetylalanine is present on Ala-2.

Belongs to the class I-like SAM-binding methyltransferase superfamily. TRM11 methyltransferase family. As to quaternary structure, part of the heterodimeric TRMT11-TRM112 methyltransferase complex; this complex forms an active tRNA methyltransferase, where TRMT112 acts as an activator of the catalytic subunit TRMT11.

It localises to the cytoplasm. The enzyme catalyses guanosine(10) in tRNA + S-adenosyl-L-methionine = N(2)-methylguanosine(10) in tRNA + S-adenosyl-L-homocysteine + H(+). In terms of biological role, catalytic subunit of the TRMT11-TRM112 methyltransferase complex, that specifically mediates the S-adenosyl-L-methionine-dependent N(2)-methylation of guanosine nucleotide at position 10 (m2G10) in tRNAs. This is one of the major tRNA (guanine-N(2))-methyltransferases. This is tRNA (guanine(10)-N(2))-methyltransferase TRMT11 from Mus musculus (Mouse).